A 208-amino-acid chain; its full sequence is Large ribosomal subunit protein bL25 (208 aa).

Positions 178–208 (LPPQQSEVPEPDSEEEPKEPEAIKEKDNDGE) are disordered. Positions 186–195 (PEPDSEEEPK) are enriched in acidic residues. A compositionally biased stretch (basic and acidic residues) spans 196 to 208 (EPEAIKEKDNDGE).

This sequence belongs to the bacterial ribosomal protein bL25 family. CTC subfamily. Part of the 50S ribosomal subunit; part of the 5S rRNA/L5/L18/L25 subcomplex. Contacts the 5S rRNA. Binds to the 5S rRNA independently of L5 and L18.

Its function is as follows. This is one of the proteins that binds to the 5S RNA in the ribosome where it forms part of the central protuberance. The sequence is that of Large ribosomal subunit protein bL25 from Bacillus pumilus (strain SAFR-032).